Consider the following 243-residue polypeptide: Tetraspanin-36 (243 aa).

At 1–9 (MDCGIITSK) the chain is on the cytoplasmic side. The helical transmembrane segment at 10–30 (TILLLLSLIFWAAGAALAYVG) threads the bilayer. The Lumenal portion of the chain corresponds to 31–49 (SYVIKSYNNFEDFMSDRHT). The chain crosses the membrane as a helical span at residues 50–70 (LIPAAIIIGVAVVMFIIGFVG). Residues 71–84 (CCATLRESKVGLGL) are Cytoplasmic-facing. Residues 85-105 (FLIIIMLIFAAEVTAFVFGII) traverse the membrane as a helical segment. Residues 106-208 (YRGRIRGDLE…QVLQDVLSYA (103 aa)) lie on the Lumenal side of the membrane. Residues N149, N163, and N174 are each glycosylated (N-linked (GlcNAc...) asparagine). Residues 209-229 (MLVILGFAIIKFFGMLSVCVI) form a helical membrane-spanning segment. Topologically, residues 230–243 (TCKSKKNEYQPLYA) are cytoplasmic.

Belongs to the tetraspanin (TM4SF) family. In terms of processing, N-glycosylated. In terms of tissue distribution, strongly expressed in melanophores and xanthophores. Also detected in eye, brain, heart, skin, fin, testis and ovary.

It localises to the golgi apparatus membrane. The protein localises to the endoplasmic reticulum membrane. Functionally, plays a role in migration and segregation of pigment cells (melanophores and xanthophores). Contributes to pigment stripe patterning in the epidermis. In Danio rerio (Zebrafish), this protein is Tetraspanin-36.